The sequence spans 239 residues: Tetraspanin-9 (239 aa).

At 1 to 13 the chain is on the cytoplasmic side; that stretch reads MARGCLCCLKYMM. A helical transmembrane segment spans residues 14–34; the sequence is FLFNLIFWLCGCGLLGVGIWL. The Extracellular segment spans residues 35–55; it reads SVSQGNFATFSPSFPSLSAAN. Residues 56–76 traverse the membrane as a helical segment; the sequence is LVIAIGTIVMVTGFLGCLGAI. The Cytoplasmic portion of the chain corresponds to 77–85; sequence KENKCLLLS. A helical transmembrane segment spans residues 86–106; that stretch reads FFIVLLVILLAELILLILFFV. At 107–203 the chain is on the extracellular side; that stretch reads YMDKVNENAK…VKMWFDDNKH (97 aa). Residue asparagine 180 is glycosylated (N-linked (GlcNAc...) asparagine). Residues 204–224 traverse the membrane as a helical segment; it reads VLGTVGMCILIMQILGMAFSM. Residues 225-239 are Cytoplasmic-facing; that stretch reads TLFQHIHRTGKKYDA.

Belongs to the tetraspanin (TM4SF) family. In terms of assembly, found in a complex with GP6. In terms of processing, glycosylated. In terms of tissue distribution, expressed in megakaryocytes and platelets (at protein level).

It localises to the membrane. The chain is Tetraspanin-9 (TSPAN9) from Homo sapiens (Human).